Reading from the N-terminus, the 380-residue chain is XK-related protein 9 (380 aa).

Helical transmembrane passes span Leu-10–Val-30, Val-39–Phe-59, Leu-81–Ile-101, Cys-167–Val-187, Ala-228–Gly-248, Ser-264–Val-284, Ile-294–Leu-314, and Thr-329–Leu-349.

Belongs to the XK family.

It localises to the cell membrane. It carries out the reaction a 1,2-diacyl-sn-glycero-3-phospho-L-serine(in) = a 1,2-diacyl-sn-glycero-3-phospho-L-serine(out). Its function is as follows. Phospholipid scramblase that promotes phosphatidylserine exposure on apoptotic cell surface. Phosphatidylserine is a specific marker only present at the surface of apoptotic cells and acts as a specific signal for engulfment. The chain is XK-related protein 9 from Tetraodon nigroviridis (Spotted green pufferfish).